The following is a 93-amino-acid chain: Parbolysin P5 (93 aa).

3 disulfide bridges follow: Cys16–Cys37, Cys22–Cys33, and Cys47–Cys60.

This sequence belongs to the worm cytolysin family. As to expression, localized within the skin and proboscis and are most readily isolated from body mucus secretions.

Its subcellular location is the secreted. Its function is as follows. Cytolysin that shows hemolytic activity (on bovine erythrocytes, HC(50)=5.75 mg/ml). This hemolytic activity is completely inhibited by small unilamelar vesicles composed of PC/PG, PC/PI and PC/PS in 1:1 molar ratios (with at least 100 mg/ml concentration). This Parborlasia corrugatus (Antarctic nemertean worm) protein is Parbolysin P5.